Consider the following 547-residue polypeptide: Chaperonin GroEL 1 (547 aa).

Residues 30–33 (TLGP), Lys51, 87–91 (DGTTT), Gly415, and Asp496 each bind ATP.

The protein belongs to the chaperonin (HSP60) family. Forms a cylinder of 14 subunits composed of two heptameric rings stacked back-to-back. Interacts with the co-chaperonin GroES.

It localises to the cytoplasm. It catalyses the reaction ATP + H2O + a folded polypeptide = ADP + phosphate + an unfolded polypeptide.. Functionally, together with its co-chaperonin GroES, plays an essential role in assisting protein folding. The GroEL-GroES system forms a nano-cage that allows encapsulation of the non-native substrate proteins and provides a physical environment optimized to promote and accelerate protein folding. In Bradyrhizobium sp. (strain BTAi1 / ATCC BAA-1182), this protein is Chaperonin GroEL 1.